The following is a 277-amino-acid chain: Carbonyl reductase [NADPH] 1 (277 aa).

NADP(+) is bound by residues 10 to 34 (VTGANKGVGFAITRALCRLFSGDVL), 63 to 64 (DI), and N90. Position 30 is a phosphoserine (S30). Residues 95–97 (FKM) and Q106 contribute to the glutathione site. Position 140 (S140) interacts with substrate. 193-194 (AY) serves as a coordination point for glutathione. Y194 (proton acceptor) is an active-site residue. NADP(+) is bound by residues 194 to 198 (YGVTK) and 231 to 233 (VRT).

The protein belongs to the short-chain dehydrogenases/reductases (SDR) family. Monomer. Present in liver and kidney.

Its subcellular location is the cytoplasm. The catalysed reaction is a secondary alcohol + NADP(+) = a ketone + NADPH + H(+). It catalyses the reaction prostaglandin F2alpha + NADP(+) = prostaglandin E2 + NADPH + H(+). The enzyme catalyses prostaglandin E1 + NADP(+) = 15-oxoprostaglandin E1 + NADPH + H(+). It carries out the reaction menadione + NADPH + H(+) = menadiol + NADP(+). The catalysed reaction is prostaglandin D2 + NADP(+) = 15-oxoprostaglandin D2 + NADPH + H(+). It catalyses the reaction prostaglandin E2 + NADP(+) = 15-oxoprostaglandin E2 + NADPH + H(+). The enzyme catalyses prostaglandin F2alpha + NADP(+) = 15-oxoprostaglandin F2alpha + NADPH + H(+). It carries out the reaction daunorubicin + NADPH + H(+) = 13-dihydrodaunorubicin + NADP(+). The catalysed reaction is S-nitrosoglutathione + NADPH + H(+) = S-(hydroxysulfenamide)glutathione + NADP(+). It catalyses the reaction a primary alcohol + NADP(+) = an aldehyde + NADPH + H(+). The enzyme catalyses cortisol + NADPH + H(+) = 20beta-dihydrocortisol + NADP(+). It carries out the reaction corticosterone + NADPH + H(+) = 20beta-dihydrocorticosterone + NADP(+). Its function is as follows. NADPH-dependent reductase with broad substrate specificity. Catalyzes the reduction of a wide variety of carbonyl compounds including quinones, prostaglandins, menadione, plus various xenobiotics. Catalyzes the reduction of the antitumor anthracyclines doxorubicin and daunorubicin to the cardiotoxic compounds doxorubicinol and daunorubicinol. Can convert prostaglandin E to prostaglandin F2-alpha. Can bind glutathione, which explains its higher affinity for glutathione-conjugated substrates. Catalyzes the reduction of S-nitrosoglutathione. In addition, participates in the glucocorticoid metabolism by catalyzing the NADPH-dependent cortisol/corticosterone into 20beta-dihydrocortisol (20b-DHF) or 20beta-corticosterone (20b-DHB), which are weak agonists of NR3C1 and NR3C2 in adipose tissue. The polypeptide is Carbonyl reductase [NADPH] 1 (Oryctolagus cuniculus (Rabbit)).